The primary structure comprises 126 residues: Large ribosomal subunit protein bL12 (126 aa).

It belongs to the bacterial ribosomal protein bL12 family. In terms of assembly, homodimer. Part of the ribosomal stalk of the 50S ribosomal subunit. Forms a multimeric L10(L12)X complex, where L10 forms an elongated spine to which 2 to 4 L12 dimers bind in a sequential fashion. Binds GTP-bound translation factors.

Its function is as follows. Forms part of the ribosomal stalk which helps the ribosome interact with GTP-bound translation factors. Is thus essential for accurate translation. This chain is Large ribosomal subunit protein bL12, found in Rhizorhabdus wittichii (strain DSM 6014 / CCUG 31198 / JCM 15750 / NBRC 105917 / EY 4224 / RW1) (Sphingomonas wittichii).